Reading from the N-terminus, the 199-residue chain is Recombination protein RecR (199 aa).

A C4-type zinc finger spans residues 56-71 (CAICGNVSEKETCGIC). In terms of domain architecture, Toprim spans 79–174 (ATICVVEEAK…RVTRLASGLP (96 aa)).

The protein belongs to the RecR family.

Functionally, may play a role in DNA repair. It seems to be involved in an RecBC-independent recombinational process of DNA repair. It may act with RecF and RecO. The polypeptide is Recombination protein RecR (Clavibacter michiganensis subsp. michiganensis (strain NCPPB 382)).